The sequence spans 67 residues: ATP synthase F(0) complex subunit 8 (67 aa).

Residues 8-24 traverse the membrane as a helical segment; sequence PWFITILSMIITLFILF. N6-acetyllysine; alternate is present on Lys-54. Lys-54 carries the N6-succinyllysine; alternate modification. N6-acetyllysine is present on Lys-57.

This sequence belongs to the ATPase protein 8 family. As to quaternary structure, component of the ATP synthase complex composed at least of ATP5F1A/subunit alpha, ATP5F1B/subunit beta, ATP5MC1/subunit c (homooctomer), MT-ATP6/subunit a, MT-ATP8/subunit 8, ATP5ME/subunit e, ATP5MF/subunit f, ATP5MG/subunit g, ATP5MK/subunit k, ATP5MJ/subunit j, ATP5F1C/subunit gamma, ATP5F1D/subunit delta, ATP5F1E/subunit epsilon, ATP5PF/subunit F6, ATP5PB/subunit b, ATP5PD/subunit d, ATP5PO/subunit OSCP. ATP synthase complex consists of a soluble F(1) head domain (subunits alpha(3) and beta(3)) - the catalytic core - and a membrane F(0) domain - the membrane proton channel (subunits c, a, 8, e, f, g, k and j). These two domains are linked by a central stalk (subunits gamma, delta, and epsilon) rotating inside the F1 region and a stationary peripheral stalk (subunits F6, b, d, and OSCP). Interacts with PRICKLE3.

It is found in the mitochondrion membrane. In terms of biological role, subunit 8, of the mitochondrial membrane ATP synthase complex (F(1)F(0) ATP synthase or Complex V) that produces ATP from ADP in the presence of a proton gradient across the membrane which is generated by electron transport complexes of the respiratory chain. ATP synthase complex consist of a soluble F(1) head domain - the catalytic core - and a membrane F(1) domain - the membrane proton channel. These two domains are linked by a central stalk rotating inside the F(1) region and a stationary peripheral stalk. During catalysis, ATP synthesis in the catalytic domain of F(1) is coupled via a rotary mechanism of the central stalk subunits to proton translocation. In vivo, can only synthesize ATP although its ATP hydrolase activity can be activated artificially in vitro. Part of the complex F(0) domain. This chain is ATP synthase F(0) complex subunit 8, found in Orycteropus afer (Aardvark).